Here is a 545-residue protein sequence, read N- to C-terminus: Pectinesterase/pectinesterase inhibitor (545 aa).

A signal peptide spans 1–37 (MEINQPNLLEASKSCYSKITFFLLVISFAALVSTGFS). The tract at residues 38–191 (SPELSLHHKI…ILRARTSLAI (154 aa)) is pectinesterase inhibitor. Positions 38–228 (SPELSLHHKI…RRLLQTLGKD (191 aa)) are excised as a propeptide. Asn135 carries N-linked (GlcNAc...) asparagine glycosylation. A pectinesterase region spans residues 232 to 530 (DIVVAKDGSG…TVAELIQGGS (299 aa)). Residues Thr307 and Gln337 each coordinate substrate. An intrachain disulfide couples Cys326 to Cys353. Asp360 serves as the catalytic Proton donor; for pectinesterase activity. An N-linked (GlcNAc...) (complex) asparagine glycan is attached at Asn375. The active-site Nucleophile; for pectinesterase activity is Asp381. A disulfide bond links Cys394 and Cys428. Arg449 and Trp451 together coordinate substrate.

The protein in the N-terminal section; belongs to the PMEI family. In the C-terminal section; belongs to the pectinesterase family. In terms of processing, N-glycosylated.

It localises to the secreted. Its subcellular location is the cell wall. The enzyme catalyses [(1-&gt;4)-alpha-D-galacturonosyl methyl ester](n) + n H2O = [(1-&gt;4)-alpha-D-galacturonosyl](n) + n methanol + n H(+). Its pathway is glycan metabolism; pectin degradation; 2-dehydro-3-deoxy-D-gluconate from pectin: step 1/5. Its function is as follows. Acts in the modification of cell walls via demethylesterification of cell wall pectin. This Ficus pumila var. awkeotsang (Jelly fig) protein is Pectinesterase/pectinesterase inhibitor.